Reading from the N-terminus, the 162-residue chain is Large ribosomal subunit protein bL17 (162 aa).

Positions 125 to 140 (AAKEAPAKEVAEEKAA) are enriched in basic and acidic residues. Residues 125-162 (AAKEAPAKEVAEEKAAKPAKKAAPKKAEKEEAEDAAEA) form a disordered region.

This sequence belongs to the bacterial ribosomal protein bL17 family. Part of the 50S ribosomal subunit. Contacts protein L32.

This chain is Large ribosomal subunit protein bL17, found in Oleidesulfovibrio alaskensis (strain ATCC BAA-1058 / DSM 17464 / G20) (Desulfovibrio alaskensis).